The following is a 1047-amino-acid chain: Probable alpha-mannosidase At5g66150 (1047 aa).

The N-terminal stretch at 1–27 (MEKPGMSLLKGSLCVIVFLLLLSLVES) is a signal peptide. 3 residues coordinate Zn(2+): His56, Asp58, and Asp178. N-linked (GlcNAc...) asparagine glycosylation is found at Asn280, Asn287, and Asn345. His419 serves as a coordination point for Zn(2+). Disulfide bonds link Cys455-Cys465 and Cys476-Cys484. Residues Asn480, Asn508, Asn541, Asn605, Asn606, Asn668, Asn780, and Asn857 are each glycosylated (N-linked (GlcNAc...) asparagine). A disulfide bridge connects residues Cys855 and Cys860.

It belongs to the glycosyl hydrolase 38 family. As to quaternary structure, homodimer. Zn(2+) is required as a cofactor.

It is found in the vacuole. The enzyme catalyses Hydrolysis of terminal, non-reducing alpha-D-mannose residues in alpha-D-mannosides.. Its function is as follows. Liberates mannose from p-nitrophenyl-alpha-D-mannoside in vitro. The chain is Probable alpha-mannosidase At5g66150 from Arabidopsis thaliana (Mouse-ear cress).